Here is a 542-residue protein sequence, read N- to C-terminus: CTP synthase (542 aa).

The interval 1-265 is amidoligase domain; sequence MTRYIFVTGG…DDIVVERFGL (265 aa). Residue S13 participates in CTP binding. S13 contacts UTP. Residues 14-19 and D71 contribute to the ATP site; that span reads SLGKGI. Residues D71 and E139 each coordinate Mg(2+). CTP contacts are provided by residues 146 to 148, 186 to 191, and K222; these read DIE and KTKPTQ. UTP-binding positions include 186–191 and K222; that span reads KTKPTQ. The Glutamine amidotransferase type-1 domain occupies 290–541; that stretch reads TIAMVGKYME…VNAALKYSGK (252 aa). Position 351 (G351) interacts with L-glutamine. Residue C378 is the Nucleophile; for glutamine hydrolysis of the active site. Residues 379–382, E402, and R469 each bind L-glutamine; that span reads LGMQ. Residues H514 and E516 contribute to the active site.

This sequence belongs to the CTP synthase family. Homotetramer.

The enzyme catalyses UTP + L-glutamine + ATP + H2O = CTP + L-glutamate + ADP + phosphate + 2 H(+). It carries out the reaction L-glutamine + H2O = L-glutamate + NH4(+). It catalyses the reaction UTP + NH4(+) + ATP = CTP + ADP + phosphate + 2 H(+). The protein operates within pyrimidine metabolism; CTP biosynthesis via de novo pathway; CTP from UDP: step 2/2. With respect to regulation, allosterically activated by GTP, when glutamine is the substrate; GTP has no effect on the reaction when ammonia is the substrate. The allosteric effector GTP functions by stabilizing the protein conformation that binds the tetrahedral intermediate(s) formed during glutamine hydrolysis. Inhibited by the product CTP, via allosteric rather than competitive inhibition. Its function is as follows. Catalyzes the ATP-dependent amination of UTP to CTP with either L-glutamine or ammonia as the source of nitrogen. Regulates intracellular CTP levels through interactions with the four ribonucleotide triphosphates. This is CTP synthase from Pseudomonas aeruginosa (strain LESB58).